The sequence spans 354 residues: MNAFKPLVFSGVQPTGNLHLGNYLGAIRKFVALQEDNDCIYCVVDMHAITAQLVHSDLKAQTRSIAAAFIAAGIDPVKHIVFNQSAVPQHAELAWVFNCVARIGWMERMTQFKDKSGKNAEQVSLGLLAYPSLMAADILVYRATHVPVGDDQKQHLELARDIAQKFNIDFGGHIRNAGLGVNITVGDEPVHAYFPMVEPLIGGPAPRVMSLKDGTKKMSKSDPSDLSRINLMDDVDAISKKIKKAKTDPDALPSEVEGLKGRPEAENLVGIYAALSDKTKADVLAEFGGQQFSTFKPALVELAVNVLAPVNNEMRRLLDDPTHIDAILSQGGERARTIAEKTMNEVRDIIGFLR.

ATP is bound by residues 13–15 and 21–22; these read QPT and GN. The 'HIGH' region signature appears at 14 to 22; it reads PTGNLHLGN. An L-tryptophan-binding site is contributed by aspartate 137. ATP contacts are provided by residues 149 to 151, valine 208, and 217 to 221; these read GDD and KMSKS. The 'KMSKS' region signature appears at 217–221; it reads KMSKS.

The protein belongs to the class-I aminoacyl-tRNA synthetase family. As to quaternary structure, homodimer.

Its subcellular location is the cytoplasm. It carries out the reaction tRNA(Trp) + L-tryptophan + ATP = L-tryptophyl-tRNA(Trp) + AMP + diphosphate + H(+). In terms of biological role, catalyzes the attachment of tryptophan to tRNA(Trp). This Agrobacterium fabrum (strain C58 / ATCC 33970) (Agrobacterium tumefaciens (strain C58)) protein is Tryptophan--tRNA ligase.